The chain runs to 329 residues: uncharacterized protein (329 aa).

The first 32 residues, 1–32 (MSQDRGPRRPRRLEKCALISASATVLSLTASG), serve as a signal peptide directing secretion. A lipid anchor (N-palmitoyl cysteine) is attached at Cys33. The S-diacylglycerol cysteine moiety is linked to residue Cys33.

Its subcellular location is the cell membrane. This is an uncharacterized protein from Streptomyces coelicolor (strain ATCC BAA-471 / A3(2) / M145).